The following is a 380-amino-acid chain: Glucose-1-phosphate adenylyltransferase (380 aa).

Residues Gly164, 179-180 (EK), and Ser190 contribute to the alpha-D-glucose 1-phosphate site.

This sequence belongs to the bacterial/plant glucose-1-phosphate adenylyltransferase family. In terms of assembly, homotetramer.

The enzyme catalyses alpha-D-glucose 1-phosphate + ATP + H(+) = ADP-alpha-D-glucose + diphosphate. It participates in glycan biosynthesis; glycogen biosynthesis. Involved in the biosynthesis of ADP-glucose, a building block required for the elongation reactions to produce glycogen. Catalyzes the reaction between ATP and alpha-D-glucose 1-phosphate (G1P) to produce pyrophosphate and ADP-Glc. This Streptococcus gordonii (strain Challis / ATCC 35105 / BCRC 15272 / CH1 / DL1 / V288) protein is Glucose-1-phosphate adenylyltransferase.